The following is a 419-amino-acid chain: Tol-Pal system protein TolB (419 aa).

The signal sequence occupies residues 1–19; it reads MFNRIISLFLLLFTGQVIA.

It belongs to the TolB family. In terms of assembly, the Tol-Pal system is composed of five core proteins: the inner membrane proteins TolA, TolQ and TolR, the periplasmic protein TolB and the outer membrane protein Pal. They form a network linking the inner and outer membranes and the peptidoglycan layer.

It localises to the periplasm. In terms of biological role, part of the Tol-Pal system, which plays a role in outer membrane invagination during cell division and is important for maintaining outer membrane integrity. The polypeptide is Tol-Pal system protein TolB (Legionella pneumophila (strain Corby)).